The following is a 244-amino-acid chain: Triosephosphate isomerase (244 aa).

9–11 (NWK) is a binding site for substrate. H93 functions as the Electrophile in the catalytic mechanism. Catalysis depends on E161, which acts as the Proton acceptor. Substrate is bound by residues G167, S206, and 227-228 (GG).

Belongs to the triosephosphate isomerase family. As to quaternary structure, homodimer.

The protein resides in the cytoplasm. It carries out the reaction D-glyceraldehyde 3-phosphate = dihydroxyacetone phosphate. The protein operates within carbohydrate biosynthesis; gluconeogenesis. It functions in the pathway carbohydrate degradation; glycolysis; D-glyceraldehyde 3-phosphate from glycerone phosphate: step 1/1. Functionally, involved in the gluconeogenesis. Catalyzes stereospecifically the conversion of dihydroxyacetone phosphate (DHAP) to D-glyceraldehyde-3-phosphate (G3P). This Deinococcus geothermalis (strain DSM 11300 / CIP 105573 / AG-3a) protein is Triosephosphate isomerase.